The sequence spans 438 residues: Exoglucanase 3 (438 aa).

The N-terminal stretch at 1–20 (MFKFAALLALASLVPGFVQA) is a signal peptide. Residues 21 to 59 (QSPVWGQCGGNGWTGPTTCASGSTCVKQNDFYSQCLPNN) enclose the CBM1 domain. 2 disulfide bridges follow: Cys28–Cys45 and Cys39–Cys55. Positions 57–90 (PNNQAPPSTTTQPGTTPPATTTSGGTGPTSGAGN) are disordered. Residues 60 to 87 (QAPPSTTTQPGTTPPATTTSGGTGPTSG) form a linker region. A compositionally biased stretch (low complexity) spans 61–79 (APPSTTTQPGTTPPATTTS). The interval 88 to 438 (AGNPYTGKTV…TLVANANPAL (351 aa)) is catalytic. 2 cysteine pairs are disulfide-bonded: Cys170–Cys229 and Cys360–Cys407. Asp215 functions as the Proton donor in the catalytic mechanism. The active-site Nucleophile is Asp393.

It belongs to the glycosyl hydrolase 6 (cellulase B) family.

The enzyme catalyses Hydrolysis of (1-&gt;4)-beta-D-glucosidic linkages in cellulose and cellotetraose, releasing cellobiose from the non-reducing ends of the chains.. Functionally, shows enzymatic activity towards crystalline cellulose. At long reaction times. It is also able to degrade carboxymethyl cellulose and barley B-glucan. The protein is Exoglucanase 3 (cel3) of Agaricus bisporus (White button mushroom).